The following is a 430-amino-acid chain: Asparagine--tRNA ligase (430 aa).

It belongs to the class-II aminoacyl-tRNA synthetase family. Homodimer.

The protein localises to the cytoplasm. The enzyme catalyses tRNA(Asn) + L-asparagine + ATP = L-asparaginyl-tRNA(Asn) + AMP + diphosphate + H(+). The protein is Asparagine--tRNA ligase of Staphylococcus aureus (strain USA300).